A 350-amino-acid polypeptide reads, in one-letter code: UDP-3-O-acylglucosamine N-acyltransferase (350 aa).

Histidine 248 serves as the catalytic Proton acceptor.

It belongs to the transferase hexapeptide repeat family. LpxD subfamily. In terms of assembly, homotrimer.

The enzyme catalyses a UDP-3-O-[(3R)-3-hydroxyacyl]-alpha-D-glucosamine + a (3R)-hydroxyacyl-[ACP] = a UDP-2-N,3-O-bis[(3R)-3-hydroxyacyl]-alpha-D-glucosamine + holo-[ACP] + H(+). The protein operates within bacterial outer membrane biogenesis; LPS lipid A biosynthesis. Catalyzes the N-acylation of UDP-3-O-acylglucosamine using 3-hydroxyacyl-ACP as the acyl donor. Is involved in the biosynthesis of lipid A, a phosphorylated glycolipid that anchors the lipopolysaccharide to the outer membrane of the cell. The protein is UDP-3-O-acylglucosamine N-acyltransferase of Nostoc punctiforme (strain ATCC 29133 / PCC 73102).